Here is a 103-residue protein sequence, read N- to C-terminus: Small ribosomal subunit protein uS10 (103 aa).

The protein belongs to the universal ribosomal protein uS10 family. As to quaternary structure, part of the 30S ribosomal subunit.

Involved in the binding of tRNA to the ribosomes. The polypeptide is Small ribosomal subunit protein uS10 (Acinetobacter baylyi (strain ATCC 33305 / BD413 / ADP1)).